We begin with the raw amino-acid sequence, 200 residues long: Ribonuclease HII (200 aa).

Residues 9–198 enclose the RNase H type-2 domain; it reads ALIAGVDEVG…VQRVLAQAKG (190 aa). A divalent metal cation contacts are provided by Asp15, Glu16, and Asp107.

This sequence belongs to the RNase HII family. Requires Mn(2+) as cofactor. Mg(2+) serves as cofactor.

The protein localises to the cytoplasm. The catalysed reaction is Endonucleolytic cleavage to 5'-phosphomonoester.. Its function is as follows. Endonuclease that specifically degrades the RNA of RNA-DNA hybrids. This is Ribonuclease HII from Pseudoalteromonas translucida (strain TAC 125).